The sequence spans 190 residues: Putative serine carboxypeptidase-like 54 (190 aa).

An N-terminal signal peptide occupies residues 1–25; that stretch reads MATKTFSLPFLLIVCIFSQLSSTFG. Residues N58, N59, and N105 are each glycosylated (N-linked (GlcNAc...) asparagine).

This sequence belongs to the peptidase S10 family.

The protein resides in the secreted. This is Putative serine carboxypeptidase-like 54 (SCPL54) from Arabidopsis thaliana (Mouse-ear cress).